We begin with the raw amino-acid sequence, 730 residues long: Semaphorin-1A (730 aa).

The first 20 residues, 1–20 (MRAALVAVAALLWVALHAAA), serve as a signal peptide directing secretion. Residues 21-630 (WVNDVSPKMY…LPIYTAETLT (610 aa)) lie on the Extracellular side of the membrane. In terms of domain architecture, Sema spans 28–490 (KMYVQFGEER…SDDEILAIKL (463 aa)). Asn44 and Asn71 each carry an N-linked (GlcNAc...) asparagine glycan. 2 disulfide bridges follow: Cys97/Cys107 and Cys125/Cys134. Asn163 and Asn267 each carry an N-linked (GlcNAc...) asparagine glycan. Cystine bridges form between Cys244/Cys358 and Cys268/Cys317. The N-linked (GlcNAc...) asparagine glycan is linked to Asn360. 2 disulfide bridges follow: Cys493-Cys512 and Cys504-Cys521. Asn539 carries N-linked (GlcNAc...) asparagine glycosylation. Residues 631–651 (IAIVTSCLGALVVGFISGFLF) form a helical membrane-spanning segment. Residues 652–730 (SRRCRGEDYT…PIQKVKKTYI (79 aa)) lie on the Cytoplasmic side of the membrane. The span at 708 to 720 (ANGKNANSSAENK) shows a compositional bias: low complexity. Residues 708 to 730 (ANGKNANSSAENKPIQKVKKTYI) are disordered.

The protein belongs to the semaphorin family. As to expression, dynamically expressed on a subset of axon pathways in the developing CNS and on circumferential bands of epithelial cells in developing limb buds.

Its subcellular location is the membrane. Plays a role in growth cones guidance. This chain is Semaphorin-1A (SEMA-1A), found in Schistocerca americana (American grasshopper).